The primary structure comprises 713 residues: Cyclomaltodextrin glucanotransferase (713 aa).

The first 27 residues, 1-27, serve as a signal peptide directing secretion; that stretch reads MKKQVKWLTSVSMSVGIALGAALPVWA. An A1 region spans residues 28–165; it reads SPDTSVNNKL…NIKVVMDFAP (138 aa). Positions 54, 56, 59, 60, 78, and 80 each coordinate Ca(2+). 127 to 128 serves as a coordination point for substrate; that stretch reads YW. N166 contributes to the Ca(2+) binding site. Positions 166–229 are b; it reads NHTNPASSTD…NLYDLADINQ (64 aa). Position 167 (H167) interacts with substrate. A Ca(2+)-binding site is contributed by I217. Residue 220 to 223 coordinates substrate; sequence NLYD. D226 provides a ligand contact to Ca(2+). The segment at 230-434 is A2; the sequence is NNNTIDSYLK…LRKSNPALAY (205 aa). R254 lines the substrate pocket. D256 functions as the Nucleophile in the catalytic mechanism. 259 to 260 provides a ligand contact to substrate; that stretch reads KH. H260 provides a ligand contact to Ca(2+). The active-site Proton donor is the E285. 3 residues coordinate substrate: H355, D399, and R403. Residues 435 to 522 form a c region; it reads GSTTQRWVNS…GTAVWQYTTT (88 aa). Residues 523–609 form a d region; it reads ESSPIIGNVG…SAAFNNFNVL (87 aa). An IPT/TIG domain is found at 526-606; sequence PIIGNVGPTM…GTTSAAFNNF (81 aa). A CBM20 domain is found at 608 to 713; that stretch reads VLTADQVTVR…VATVTVDWQN (106 aa). The tract at residues 610–713 is e; the sequence is TADQVTVRFK…VATVTVDWQN (104 aa).

It belongs to the glycosyl hydrolase 13 family. In terms of assembly, monomer. Ca(2+) is required as a cofactor.

The protein resides in the secreted. It carries out the reaction Cyclizes part of a (1-&gt;4)-alpha-D-glucan chain by formation of a (1-&gt;4)-alpha-D-glucosidic bond.. The sequence is that of Cyclomaltodextrin glucanotransferase from Paenibacillus macerans (Bacillus macerans).